The sequence spans 447 residues: Na(+)-translocating NADH-quinone reductase subunit A (447 aa).

Belongs to the NqrA family. In terms of assembly, composed of six subunits; NqrA, NqrB, NqrC, NqrD, NqrE and NqrF.

The catalysed reaction is a ubiquinone + n Na(+)(in) + NADH + H(+) = a ubiquinol + n Na(+)(out) + NAD(+). Functionally, NQR complex catalyzes the reduction of ubiquinone-1 to ubiquinol by two successive reactions, coupled with the transport of Na(+) ions from the cytoplasm to the periplasm. NqrA to NqrE are probably involved in the second step, the conversion of ubisemiquinone to ubiquinol. The polypeptide is Na(+)-translocating NADH-quinone reductase subunit A (Tolumonas auensis (strain DSM 9187 / NBRC 110442 / TA 4)).